A 207-amino-acid polypeptide reads, in one-letter code: Holliday junction branch migration complex subunit RuvA (207 aa).

A domain I region spans residues 1–65; that stretch reads MYDYIRGVLT…ETEHVLYGFH (65 aa). Positions 66 to 144 are domain II; sequence TRGERECFRM…DLLPLDAQIL (79 aa). Positions 145 to 155 are flexible linker; it reads ASWEPAKPSCM. Positions 155–207 are domain III; the sequence is MEEGIQALAALGYPKSSAERMIAEAMSELPDHASVAEILPIALKKNLQGLNKI.

It belongs to the RuvA family. As to quaternary structure, homotetramer. Forms an RuvA(8)-RuvB(12)-Holliday junction (HJ) complex. HJ DNA is sandwiched between 2 RuvA tetramers; dsDNA enters through RuvA and exits via RuvB. An RuvB hexamer assembles on each DNA strand where it exits the tetramer. Each RuvB hexamer is contacted by two RuvA subunits (via domain III) on 2 adjacent RuvB subunits; this complex drives branch migration. In the full resolvosome a probable DNA-RuvA(4)-RuvB(12)-RuvC(2) complex forms which resolves the HJ.

The protein localises to the cytoplasm. Functionally, the RuvA-RuvB-RuvC complex processes Holliday junction (HJ) DNA during genetic recombination and DNA repair, while the RuvA-RuvB complex plays an important role in the rescue of blocked DNA replication forks via replication fork reversal (RFR). RuvA specifically binds to HJ cruciform DNA, conferring on it an open structure. The RuvB hexamer acts as an ATP-dependent pump, pulling dsDNA into and through the RuvAB complex. HJ branch migration allows RuvC to scan DNA until it finds its consensus sequence, where it cleaves and resolves the cruciform DNA. The sequence is that of Holliday junction branch migration complex subunit RuvA from Chlamydia abortus (strain DSM 27085 / S26/3) (Chlamydophila abortus).